Consider the following 543-residue polypeptide: MQTMSSGIARPVLFLTAREGEYVLKDEFQLGSSSRSTPQITGSPLDPNTPVKRLFFMRINIAQFSRWDYPYPREYIEELKKIHGVHHVEENRDVPSILENYRNSKRKSHNFSSSNTPYLKLHRPASRAGAPLINAKSFISSLTFHDNIVRSFQPSIHGKTFVFANHEKSFYWLDVSAANSHSALLKMEFPRASPVCHDINSFTKSPKGLDVIIGFDTGDVLWYDPINFKYLRFNKNGQLNSSSVTAIKWVAGKDSQFLVSFRNGWLVLYDKYRHEQPLHIVVPEKNLKSLYLSSPGTFNILISINHRDDRKLNPVACYAFSKSPINGFCFSPDYQYLALVSERGTLKLFDFVKEHVLDVFHSYFAGLTCVTWSPDGKFIAIGGKDDLVSIYSFPLRKLVARCQGHKSWVTDVIFDAWRCDDDNYRIASVGLDRKLLLWDFSVSAIHRPKSAVYYVNHHSNNSKPAISDFDDVGDLTMGSEIDNSNYVNGDITIHPTLSRSLIPVISPITIYDVDDSPLSSVFFDPDCMITCATNGRIRTWQRP.

S43 carries the phosphoserine modification. WD repeat units follow at residues 239–279 (LNSS…QPLH), 320–361 (FSKS…DVFH), 362–401 (SYFA…LVAR), 404–448 (GHKS…IHRP), and 513–542 (VDDS…TWQR).

As to quaternary structure, interacts with ubp9 and bun107.

It is found in the nucleus. It localises to the cytoplasm. Its subcellular location is the cell tip. Functionally, required for the ubp9 recruitment to septa and cell tips but also for its enzymatic activity at these specific locations. The sequence is that of UBP9-binding protein bun62 (bun62) from Schizosaccharomyces pombe (strain 972 / ATCC 24843) (Fission yeast).